Reading from the N-terminus, the 862-residue chain is Piwi-like protein 1 (862 aa).

Positions 1–13 are enriched in basic residues; it reads MTGRARARARGRA. Residues 1 to 48 are disordered; it reads MTGRARARARGRARGQETVQHVGAAASQQPGYIPPRPQQSPTEGDLVG. At R14 the chain carries Omega-N-methylarginine; by PRMT5; alternate. Position 14 is a symmetric dimethylarginine; by PRMT5; alternate (R14). R49 bears the Omega-N-methylarginine; by PRMT5 mark. R53 carries the post-translational modification Omega-N-methylarginine; alternate. R53 bears the Symmetric dimethylarginine; alternate mark. A D-box motif is present at residues 218–225; sequence RRLLKIMN. Residues 279–392 form the PAZ domain; that stretch reads TVLDFMFNLY…LIPELCYLTG (114 aa). A required for binding 2'-O-methylated 3'-end of piRNAs region spans residues 317-319; the sequence is TYR. R371 is subject to Omega-N-methylarginine; by PRMT5. The segment at 480–616 is MID region; sequence SKETRGAPLI…LQMNCKMGGE (137 aa). Residues 556 to 848 enclose the Piwi domain; the sequence is IVVCLLSSNR…LAFLVGQSIH (293 aa). Catalysis depends on residues D633, E671, D703, and H837.

This sequence belongs to the argonaute family. Piwi subfamily. As to quaternary structure, interacts (via Piwi domain) with DICER1, suggesting that it forms ribonucleoprotein RISC complexes; this interaction is regulated by HSP90AB1 activity. Interacts with MAEL, KIF17, PABPC1, PRMT5 and WDR77. Interacts (when methylated on arginine residues) with TDRD1, TDRKH/TDRD2, RNF17/TDRD4, TDRD6, TDRD7 and TDRD9. Interacts with CLOCK. Interacts with MOV10L1. Interacts with ANAPC10; interaction oly takes place following piRNA-binding. Interacts with RNF8; leading to sequester RNF8 in the cytoplasm. Interacts with Tex19.1 and, probably, Tex19.2. Requires Mg(2+) as cofactor. In terms of processing, ubiquitinated by the anaphase promoting complex/cyclosome (APC/C) in late spermatids, leading to its degradation. Ubiquitination only takes place following piRNA-binding in adult testis. Ubiquitination and degradation in late spermatogenesis by APC/C is probably required to release RNF8 from the cytoplasm and promote histone to protamine exchange by RNF8. Post-translationally, arginine methylation by PRMT5 is required for the interaction with Tudor domain-containing protein (TDRD1, TDRKH/TDRD2, RNF17/TDRD4, TDRD6, TDRD7 and TDRD9) and subsequent localization to the meiotic nuage, also named P granule. In terms of tissue distribution, expressed in brain. Expressed in testis, specifically in spermatocytes (at protein level). Only detected in germ lineage cells of adult testis. Expressed in male gonads 2 weeks after birth at the initiation of spermatogenesis, but not expressed in female gonads.

It is found in the cytoplasm. Functionally, endoribonuclease that plays a central role in postnatal germ cells by repressing transposable elements and preventing their mobilization, which is essential for the germline integrity. Acts via the piRNA metabolic process, which mediates the repression of transposable elements during meiosis by forming complexes composed of piRNAs and Piwi proteins and governs the methylation and subsequent repression of transposons. Directly binds methylated piRNAs, a class of 24 to 30 nucleotide RNAs that are generated by a Dicer-independent mechanism and are primarily derived from transposons and other repeated sequence elements. Strongly prefers a uridine in the first position of their guide (g1U preference, also named 1U-bias). Not involved in the piRNA amplification loop, also named ping-pong amplification cycle. Acts as an endoribonuclease that cleaves transposon messenger RNAs. Besides their function in transposable elements repression, piRNAs are probably involved in other processes during meiosis such as translation regulation. Probable component of some RISC complex, which mediates RNA cleavage and translational silencing. Also plays a role in the formation of chromatoid bodies and is required for some miRNAs stability. Required to sequester RNF8 in the cytoplasm until late spermatogenesis; RNF8 being released upon ubiquitination and degradation of PIWIL1. This chain is Piwi-like protein 1, found in Mus musculus (Mouse).